We begin with the raw amino-acid sequence, 171 residues long: Putative MucR family transcriptional regulatory protein y4pD (171 aa).

This sequence belongs to the ros/MucR family.

The polypeptide is Putative MucR family transcriptional regulatory protein y4pD (Sinorhizobium fredii (strain NBRC 101917 / NGR234)).